A 445-amino-acid polypeptide reads, in one-letter code: Tubby-like F-box protein 14 (445 aa).

In terms of domain architecture, F-box spans 56 to 114; that stretch reads SSCWANLPPELLRDVIERLEASEAAWPSRKNVVACAAVCRTWRDMCREIVKNPEFCGKI.

It belongs to the TUB family. In terms of tissue distribution, ubiquitous.

The sequence is that of Tubby-like F-box protein 14 (TULP14) from Oryza sativa subsp. japonica (Rice).